Consider the following 903-residue polypeptide: MISSLLKKVFGSRNDRLLKQYRQTVARINALEPAMQALSDEALAAKTQEFRDRLGKGEKLDDLLPEAFAVCREASRRVLGMRHFDVQLIGGMSLHQGKIAEMRTGEGKTLVGTLPVYLNALSGDGVHVVTVNDYLASRDAGIMAPLYNFLGLSVGVNLSQMAHDDKQAAYACDITYGTNNEFGFDYLRDNMVFSVDEKVQRKLAFAVVDEVDSILIDEARTPLIISGPADDNIDMYQRMNAVPPLLKRQETEEGEGDYWVDEKAHSVLLSEAGHEHSEEILTRLGLLKEGDSLYSATNITLMHHLMAALRAYSLFHKDQHYVVQDGEVVIVDEFTGRLMAGRRWSDGLHQAVEAKEGVEINRENQTLASITFQNYFRLYGKLSGMTGTADTEAYEFQSIYNLETVVIPTNKPMIRKDSQDKVYRSAKEKYDAILADIKDCHERGQPVLVGTTSIENSELVANLLSQAKLPHNVLNAKEHAREADIVVQAGRPGMITVATNMAGRGTDIVLGGNPEPEIKAVRADDSLSDADKNARIEAIRAEWKQRHAAVLEAGGLHIVGTERHESRRIDNQLRGRSGRQGDPGSSRFYLCLEDPLLRIFASDRVAAIMDRLKMPEGEAIEHPWVTRSIENAQRKVEGRNFDIRKQLLEYDDVANDQRKVIYQQRNEILVEEDVSDVVINMREGVISDLVDLHLPPESLEEQWDLAGLEKTLASDFLLEVPVAEWIKAEPNLDIEQIRQRIVDMAAAAYQAKVDQAGDGVMRQFERSLVLQMLDNHWREHLAAMDHLRQGIHLRGYAQKNPKQEYKREAFELFADMLERIKRSVVQVLMTVQIRGQEDVDAVEPHALPDFEMQHAEPGSALGDDEDNPLSPEALASQGLRINRNDACPCGSGKKYKQCHGRLA.

ATP-binding positions include Gln-87, 105–109, and Asp-507; that span reads GEGKT. Disordered regions lie at residues 565–584 and 855–877; these read ESRRIDNQLRGRSGRQGDPG and AEPGSALGDDEDNPLSPEALASQ. Zn(2+) is bound by residues Cys-887, Cys-889, Cys-898, and His-899.

This sequence belongs to the SecA family. In terms of assembly, monomer and homodimer. Part of the essential Sec protein translocation apparatus which comprises SecA, SecYEG and auxiliary proteins SecDF-YajC and YidC. Requires Zn(2+) as cofactor.

It is found in the cell inner membrane. The protein localises to the cytoplasm. The catalysed reaction is ATP + H2O + cellular proteinSide 1 = ADP + phosphate + cellular proteinSide 2.. In terms of biological role, part of the Sec protein translocase complex. Interacts with the SecYEG preprotein conducting channel. Has a central role in coupling the hydrolysis of ATP to the transfer of proteins into and across the cell membrane, serving both as a receptor for the preprotein-SecB complex and as an ATP-driven molecular motor driving the stepwise translocation of polypeptide chains across the membrane. The sequence is that of Protein translocase subunit SecA from Chromobacterium violaceum (strain ATCC 12472 / DSM 30191 / JCM 1249 / CCUG 213 / NBRC 12614 / NCIMB 9131 / NCTC 9757 / MK).